The following is a 715-amino-acid chain: Forkhead box protein P2 (715 aa).

Positions 1-28 (MMQESATETISNSSMNQNGMSTLSSQLD) are enriched in polar residues. Disordered regions lie at residues 1 to 46 (MMQE…EVST) and 281 to 339 (DNGI…TGAS). Low complexity predominate over residues 292 to 305 (TTNNSSSTTSSNTS). Residues 326–337 (ARRDSSSHEETG) are compositionally biased toward basic and acidic residues. A C2H2-type zinc finger spans residues 346–371 (GVCKWPGCESICEDFGQFLKHLNNEH). Positions 388-409 (VQQLEIQLSKERERLQAMMTHL) are leucine-zipper. Positions 422-426 (PLNLV) are CTBP1-binding. Low complexity predominate over residues 438-459 (TSPQSLPQTPTTPTAPVTPITQ). The tract at residues 438-465 (TSPQSLPQTPTTPTAPVTPITQGPSVIT) is disordered. A DNA-binding region (fork-head) is located at residues 504 to 594 (RPPFTYATLI…SQKITGSPTL (91 aa)). Disordered stretches follow at residues 649–668 (LDHI…QPHI) and 678–715 (VIAE…EDLE). A compositionally biased stretch (acidic residues) spans 699 to 715 (LEDDREIEEEPLSEDLE).

In terms of assembly, forms homodimers and heterodimers with FOXP1 and FOXP4. Dimerization is required for DNA-binding. Interacts with CTBP1. Interacts with FOXP1. Isoform 1 and isoform 3 interact with TBR1. Interacts with ZMYM2. As to expression, isoform 1 and isoform 6 are expressed in adult and fetal brain, caudate nucleus and lung.

It localises to the nucleus. In terms of biological role, transcriptional repressor that may play a role in the specification and differentiation of lung epithelium. May also play a role in developing neural, gastrointestinal and cardiovascular tissues. Can act with CTBP1 to synergistically repress transcription but CTPBP1 is not essential. Plays a role in synapse formation by regulating SRPX2 levels. Involved in neural mechanisms mediating the development of speech and language. The polypeptide is Forkhead box protein P2 (FOXP2) (Homo sapiens (Human)).